We begin with the raw amino-acid sequence, 284 residues long: Nucleoid occlusion protein (284 aa).

The H-T-H motif DNA-binding region spans 143–162 (EALAQRVGKSQSAIANKMRL).

This sequence belongs to the ParB family.

Its subcellular location is the cytoplasm. The protein resides in the nucleoid. Functionally, effects nucleoid occlusion by binding relatively nonspecifically to DNA and preventing the assembly of the division machinery in the vicinity of the nucleoid, especially under conditions that disturb the cell cycle. It helps to coordinate cell division and chromosome segregation by preventing the formation of the Z ring through the nucleoid, which would cause chromosome breakage. The sequence is that of Nucleoid occlusion protein from Listeria monocytogenes serotype 4b (strain CLIP80459).